The primary structure comprises 313 residues: HPr kinase/phosphorylase (313 aa).

Active-site residues include H140 and K161. 155 to 162 (GNSGAGKS) lines the ATP pocket. Residue S162 participates in Mg(2+) binding. The active-site Proton acceptor; for phosphorylation activity. Proton donor; for dephosphorylation activity is D179. The important for the catalytic mechanism of both phosphorylation and dephosphorylation stretch occupies residues 203–212 (IEVRGLGILN). E204 is a Mg(2+) binding site. The active site involves R246. The important for the catalytic mechanism of dephosphorylation stretch occupies residues 267 to 272 (PVAAGR).

It belongs to the HPrK/P family. Homohexamer. The cofactor is Mg(2+).

The catalysed reaction is [HPr protein]-L-serine + ATP = [HPr protein]-O-phospho-L-serine + ADP + H(+). It carries out the reaction [HPr protein]-O-phospho-L-serine + phosphate + H(+) = [HPr protein]-L-serine + diphosphate. Catalyzes the ATP- as well as the pyrophosphate-dependent phosphorylation of a specific serine residue in HPr, a phosphocarrier protein of the phosphoenolpyruvate-dependent sugar phosphotransferase system (PTS). HprK/P also catalyzes the pyrophosphate-producing, inorganic phosphate-dependent dephosphorylation (phosphorolysis) of seryl-phosphorylated HPr (P-Ser-HPr). The chain is HPr kinase/phosphorylase from Aromatoleum aromaticum (strain DSM 19018 / LMG 30748 / EbN1) (Azoarcus sp. (strain EbN1)).